A 129-amino-acid chain; its full sequence is UPF0102 protein CPS_4433 (129 aa).

Belongs to the UPF0102 family.

This is UPF0102 protein CPS_4433 from Colwellia psychrerythraea (strain 34H / ATCC BAA-681) (Vibrio psychroerythus).